Reading from the N-terminus, the 282-residue chain is HMG box-containing protein R545 (282 aa).

The interval 1-282 (MPKKTATKAN…KKEASDEESD (282 aa)) is disordered. Residues 16–29 (DSENDSVVSEEEDN) are compositionally biased toward acidic residues. Basic residues predominate over residues 70–87 (KGKVNAKKAPAKKAPVKK). Residues 93–121 (DSDNEEDEASEDGSDDEEDVVSADDSDSD) show a composition bias toward acidic residues. Basic residues predominate over residues 127 to 153 (KAAKKAPAKKAPAKKAPAKKAPAKKGK). Basic and acidic residues-rich tracts occupy residues 176 to 187 (TKKDGDKPKKPL) and 197 to 214 (RMPE…KEYM). The segment at residues 183-252 (PKKPLSDYQK…KAPAKGGSKS (70 aa)) is a DNA-binding region (HMG box). Basic residues predominate over residues 253-273 (TAKKAPAKKAPAKKAPAKKSK).

The sequence is that of HMG box-containing protein R545 from Acanthamoeba polyphaga mimivirus (APMV).